The chain runs to 689 residues: Glycine--tRNA ligase beta subunit (689 aa).

It belongs to the class-II aminoacyl-tRNA synthetase family. In terms of assembly, tetramer of two alpha and two beta subunits.

The protein resides in the cytoplasm. The catalysed reaction is tRNA(Gly) + glycine + ATP = glycyl-tRNA(Gly) + AMP + diphosphate. This Escherichia coli O17:K52:H18 (strain UMN026 / ExPEC) protein is Glycine--tRNA ligase beta subunit.